The primary structure comprises 296 residues: Acetyl-coenzyme A carboxylase carboxyl transferase subunit beta (296 aa).

Residues 25–294 (VWTKCTSCEQ…PFVEPELISE (270 aa)) enclose the CoA carboxyltransferase N-terminal domain. The Zn(2+) site is built by Cys-29, Cys-32, Cys-48, and Cys-51. Residues 29 to 51 (CTSCEQVLYSEELKRNLYVCPKC) form a C4-type zinc finger.

This sequence belongs to the AccD/PCCB family. As to quaternary structure, acetyl-CoA carboxylase is a heterohexamer composed of biotin carboxyl carrier protein (AccB), biotin carboxylase (AccC) and two subunits each of ACCase subunit alpha (AccA) and ACCase subunit beta (AccD). Zn(2+) serves as cofactor.

Its subcellular location is the cytoplasm. The enzyme catalyses N(6)-carboxybiotinyl-L-lysyl-[protein] + acetyl-CoA = N(6)-biotinyl-L-lysyl-[protein] + malonyl-CoA. It participates in lipid metabolism; malonyl-CoA biosynthesis; malonyl-CoA from acetyl-CoA: step 1/1. In terms of biological role, component of the acetyl coenzyme A carboxylase (ACC) complex. Biotin carboxylase (BC) catalyzes the carboxylation of biotin on its carrier protein (BCCP) and then the CO(2) group is transferred by the transcarboxylase to acetyl-CoA to form malonyl-CoA. This is Acetyl-coenzyme A carboxylase carboxyl transferase subunit beta from Haemophilus influenzae (strain PittEE).